Here is a 424-residue protein sequence, read N- to C-terminus: Hemagglutinin-esterase (424 aa).

The first 16 residues, 1 to 16 (MFLLPRFVLVSCIIGS), serve as a signal peptide directing secretion. Residues 7 to 127 (FVLVSCIIGS…SNDIWMQNKG (121 aa)) are esterase domain 1. The Virion surface portion of the chain corresponds to 17–392 (LGFDNPPTNV…PICVYDPLPI (376 aa)). The active-site Nucleophile is the Ser40. A disulfide bridge connects residues Cys44 and Cys65. Residues Asn54, Asn89, Asn153, Asn236, and Asn301 are each glycosylated (N-linked (GlcNAc...) asparagine; by host). Cystine bridges form between Cys113-Cys162, Cys197-Cys276, and Cys205-Cys249. The segment at 128 to 266 (LFYTQVYKNM…GNYLAISNEL (139 aa)) is receptor binding. The esterase domain 2 stretch occupies residues 267–379 (LLTVPTKAIC…RCPTAADINT (113 aa)). A disulfide bridge connects residues Cys307 and Cys312. N-linked (GlcNAc...) asparagine; by host glycosylation is present at Asn316. Catalysis depends on charge relay system residues Asp326 and His329. Residues Cys347 and Cys371 are joined by a disulfide bond. Asn358 carries an N-linked (GlcNAc...) asparagine; by host glycan. A helical membrane pass occupies residues 393 to 413 (IFLGILLGVAVIIIVVLLLYF). At 414–424 (MVDNGTRLHDA) the chain is on the intravirion side. Asn417 carries N-linked (GlcNAc...) asparagine; by host glycosylation.

Belongs to the influenza type C/coronaviruses hemagglutinin-esterase family. Homodimer; disulfide-linked. Forms a complex with the M protein in the pre-Golgi. Associates then with S-M complex to form a ternary complex S-M-HE. Post-translationally, N-glycosylated in the host RER.

The protein resides in the virion membrane. The protein localises to the host cell membrane. It catalyses the reaction N-acetyl-9-O-acetylneuraminate + H2O = N-acetylneuraminate + acetate + H(+). The catalysed reaction is N-acetyl-4-O-acetylneuraminate + H2O = N-acetylneuraminate + acetate + H(+). In terms of biological role, structural protein that makes short spikes at the surface of the virus. Contains receptor binding and receptor-destroying activities. Mediates de-O-acetylation of N-acetyl-4-O-acetylneuraminic acid, which is probably the receptor determinant recognized by the virus on the surface of erythrocytes and susceptible cells. This receptor-destroying activity is important for virus release as it probably helps preventing self-aggregation and ensures the efficient spread of the progeny virus from cell to cell. May serve as a secondary viral attachment protein for initiating infection, the spike protein being the major one. May become a target for both the humoral and the cellular branches of the immune system. This Bovine coronavirus (strain Ontario) (BCoV) protein is Hemagglutinin-esterase.